A 377-amino-acid chain; its full sequence is Queuine tRNA-ribosyltransferase (377 aa).

The active-site Proton acceptor is D89. Substrate is bound by residues 89–93 (DSGGF), D143, Q188, and G215. Residues 246-252 (GVGKPED) are RNA binding. D265 serves as the catalytic Nucleophile. Residues 270–274 (TRNAR) are RNA binding; important for wobble base 34 recognition. Zn(2+) is bound by residues C303, C305, C308, and H334.

The protein belongs to the queuine tRNA-ribosyltransferase family. Homodimer. Within each dimer, one monomer is responsible for RNA recognition and catalysis, while the other monomer binds to the replacement base PreQ1. Zn(2+) serves as cofactor.

The enzyme catalyses 7-aminomethyl-7-carbaguanine + guanosine(34) in tRNA = 7-aminomethyl-7-carbaguanosine(34) in tRNA + guanine. It participates in tRNA modification; tRNA-queuosine biosynthesis. Functionally, catalyzes the base-exchange of a guanine (G) residue with the queuine precursor 7-aminomethyl-7-deazaguanine (PreQ1) at position 34 (anticodon wobble position) in tRNAs with GU(N) anticodons (tRNA-Asp, -Asn, -His and -Tyr). Catalysis occurs through a double-displacement mechanism. The nucleophile active site attacks the C1' of nucleotide 34 to detach the guanine base from the RNA, forming a covalent enzyme-RNA intermediate. The proton acceptor active site deprotonates the incoming PreQ1, allowing a nucleophilic attack on the C1' of the ribose to form the product. After dissociation, two additional enzymatic reactions on the tRNA convert PreQ1 to queuine (Q), resulting in the hypermodified nucleoside queuosine (7-(((4,5-cis-dihydroxy-2-cyclopenten-1-yl)amino)methyl)-7-deazaguanosine). This is Queuine tRNA-ribosyltransferase from Acinetobacter baumannii (strain AB307-0294).